A 334-amino-acid chain; its full sequence is Glycerol-3-phosphate dehydrogenase [NAD(P)+] (334 aa).

NADPH-binding residues include Ser14, Tyr15, His35, and Lys109. Residues Lys109, Gly138, and Thr140 each contribute to the sn-glycerol 3-phosphate site. An NADPH-binding site is contributed by Ala142. 5 residues coordinate sn-glycerol 3-phosphate: Lys194, Asp247, Ser257, Arg258, and Asn259. The Proton acceptor role is filled by Lys194. Residue Arg258 coordinates NADPH. Val282 and Glu284 together coordinate NADPH.

The protein belongs to the NAD-dependent glycerol-3-phosphate dehydrogenase family.

The protein resides in the cytoplasm. The enzyme catalyses sn-glycerol 3-phosphate + NAD(+) = dihydroxyacetone phosphate + NADH + H(+). It carries out the reaction sn-glycerol 3-phosphate + NADP(+) = dihydroxyacetone phosphate + NADPH + H(+). It participates in membrane lipid metabolism; glycerophospholipid metabolism. Its function is as follows. Catalyzes the reduction of the glycolytic intermediate dihydroxyacetone phosphate (DHAP) to sn-glycerol 3-phosphate (G3P), the key precursor for phospholipid synthesis. This is Glycerol-3-phosphate dehydrogenase [NAD(P)+] from Aeromonas salmonicida (strain A449).